The chain runs to 198 residues: Pyridoxal 5'-phosphate synthase subunit PdxT (198 aa).

50–52 (GES) provides a ligand contact to L-glutamine. Catalysis depends on cysteine 82, which acts as the Nucleophile. L-glutamine-binding positions include arginine 111 and 140 to 141 (IR). Active-site charge relay system residues include histidine 177 and glutamate 179.

It belongs to the glutaminase PdxT/SNO family. As to quaternary structure, in the presence of PdxS, forms a dodecamer of heterodimers. Only shows activity in the heterodimer.

It carries out the reaction aldehydo-D-ribose 5-phosphate + D-glyceraldehyde 3-phosphate + L-glutamine = pyridoxal 5'-phosphate + L-glutamate + phosphate + 3 H2O + H(+). It catalyses the reaction L-glutamine + H2O = L-glutamate + NH4(+). The protein operates within cofactor biosynthesis; pyridoxal 5'-phosphate biosynthesis. Its function is as follows. Catalyzes the hydrolysis of glutamine to glutamate and ammonia as part of the biosynthesis of pyridoxal 5'-phosphate. The resulting ammonia molecule is channeled to the active site of PdxS. In Leifsonia xyli subsp. xyli (strain CTCB07), this protein is Pyridoxal 5'-phosphate synthase subunit PdxT.